The following is a 155-amino-acid chain: Ribonuclease H (155 aa).

In terms of domain architecture, RNase H type-1 spans 4-145 (QQKVVEIYTD…ADALARKAIA (142 aa)). The Mg(2+) site is built by D13, E51, D73, and D137.

The protein belongs to the RNase H family. Monomer. Requires Mg(2+) as cofactor.

It localises to the cytoplasm. The enzyme catalyses Endonucleolytic cleavage to 5'-phosphomonoester.. Its function is as follows. Endonuclease that specifically degrades the RNA of RNA-DNA hybrids. The sequence is that of Ribonuclease H from Bartonella tribocorum (strain CIP 105476 / IBS 506).